The following is a 114-amino-acid chain: Holo-[acyl-carrier-protein] synthase (114 aa).

Mg(2+) is bound by residues D5 and E50.

The protein belongs to the P-Pant transferase superfamily. AcpS family. Requires Mg(2+) as cofactor.

The protein localises to the cytoplasm. The enzyme catalyses apo-[ACP] + CoA = holo-[ACP] + adenosine 3',5'-bisphosphate + H(+). Functionally, transfers the 4'-phosphopantetheine moiety from coenzyme A to a Ser of acyl-carrier-protein. This Campylobacter curvus (strain 525.92) protein is Holo-[acyl-carrier-protein] synthase.